Here is a 308-residue protein sequence, read N- to C-terminus: Glutaminase (308 aa).

The substrate site is built by S66, N117, E161, N168, Y192, Y244, and V262.

The protein belongs to the glutaminase family. Homotetramer.

It catalyses the reaction L-glutamine + H2O = L-glutamate + NH4(+). This is Glutaminase from Salmonella choleraesuis (strain SC-B67).